The sequence spans 95 residues: Large ribosomal subunit protein uL23 (95 aa).

This sequence belongs to the universal ribosomal protein uL23 family. As to quaternary structure, part of the 50S ribosomal subunit. Contacts protein L29, and trigger factor when it is bound to the ribosome.

Its function is as follows. One of the early assembly proteins it binds 23S rRNA. One of the proteins that surrounds the polypeptide exit tunnel on the outside of the ribosome. Forms the main docking site for trigger factor binding to the ribosome. The sequence is that of Large ribosomal subunit protein uL23 from Desulforapulum autotrophicum (strain ATCC 43914 / DSM 3382 / VKM B-1955 / HRM2) (Desulfobacterium autotrophicum).